A 241-amino-acid chain; its full sequence is MALNPLEQFKIHTIVELPKLFGHDINFTNSSLFMMISVVSVILFLLLGVRKGAVIPGYLQAAVEYVYDFITSIIESNTGSKGLKHIPLVFTVFTFTLSCNLVGMLPYSFTVTSHVIVTFALSMIVFTYTTIVGFKEKGINFLRILLPEGIPSWLAPMMVFIKLFAYLARPISLSIRLAANMIAGHTIIKVVAGFIMNMHLILTPIPFLFIIALIGFEVFVAILQAYIFTILTCIYLSDAVK.

Transmembrane regions (helical) follow at residues 29-49 (NSSL…LLGV), 86-106 (IPLV…GMLP), 114-134 (HVIV…IVGF), 144-164 (ILLP…IKLF), 177-197 (LAAN…FIMN), 200-220 (LILT…EVFV), and 221-241 (AILQ…DAVK).

It belongs to the ATPase A chain family. F-type ATPases have 2 components, CF(1) - the catalytic core - and CF(0) - the membrane proton channel. CF(1) has five subunits: alpha(3), beta(3), gamma(1), delta(1), epsilon(1). CF(0) has three main subunits: a(1), b(2) and c(9-12). The alpha and beta chains form an alternating ring which encloses part of the gamma chain. CF(1) is attached to CF(0) by a central stalk formed by the gamma and epsilon chains, while a peripheral stalk is formed by the delta and b chains.

The protein localises to the cell membrane. Its function is as follows. Key component of the proton channel; it plays a direct role in the translocation of protons across the membrane. The chain is ATP synthase subunit a from Wolbachia sp. subsp. Brugia malayi (strain TRS).